Here is a 2278-residue protein sequence, read N- to C-terminus: MRGHQFKSWIFELREILREIKNSHHFLDSWTQFNSVGSFIHIFFHQERFLKLFDPRIWSILLSRNSQGSPSNRYFTIKGVILFVVAVLIYRINNRNMVERKNLYLIGLLPIPMNSIGPRNDTLEESVGSSNINRLIVSLLYLPKGKKISESCFLNPKESTWVLPITKKCSMPESNWGSRWWRNWIGKKRDSSCKISNETVAGIEILFKEKDLKYLEFLFVYYMDDPIRKDHDWELFDRLSLRKSRNRINLNSGPLFEILVKHWISYLMSAFREKIPIEVEGFFKQQGAGSTIQSNDIEHVSHLFSRNKWAISLQNCAQFHMWQFRQDLFVSWGKNPPESDFLRNVSRENWIWLDNVWLVNKDRFFSKVQNVSSNIQYDSTRSSFVQVTDSSQLKGSSDQSRDHLDSISNEDSEYHTLINQREIQQRKERSILWDPSFLQTERKEIESGRFPKCLSGYSSMSRLFTEREKQMINHLFPEEIEEFLGNPTRSVRSFFSDRWSELHLGSNPTERSTRDQKLLKKQQDLSFVPSRRSEKKEMVNIFKIITYLQNTVSIHPISSDPGCDMVPKDEPDMDSSNKISFLNKNPFFDLFHLFHDRNRGGYTLHYDFASEERFQEMADLFTLSITEPDLVYHKGFAFSIDSCGLDQKQFLNEARDESKKKSLLVLPPIFYEENESFSRRIRKKWVRISCGNDLEDPKPKIVVFASNNIMEAVTQYRLIRNLIQIQYSTYGYIRNVLNRFFLMNRSDRNFEYGIQRDQIGKDTLNHRTIMKYTINQYLSNLKKSQKKWFEPLILISRTERSMNRDPDAYRYKWSNGSKSFQEHLEQSVSKQKSRFQVVFDRLRINQYSIDWSEVIDKKDLSKSLRFFLSKSLLFLSKLLLFLSNSLPFFCVSFGNIPIHRSEIYIYEELKGPNDQLCNQLLESIGLQIVHLKKLKPFLLDDHDTSQKSKFLINGGTISPFLFNKIPKWMIDSFHTRNNRRKSFDNPDSYFSMIFHDQDNWLNPVKPFHRSSLISSFYKANRLRFLNNPHHFCFYWNTRFPFSVEKARINNSDFTYGQFLNILFIRNKIFSLCVGKKKHAFWGRDTISPIESQVSNIFIPNDFPQSGDETYNLYKSFHFPSRSDPFVRRAIYSIADISGTPLTEGQIVNFERTYCQPLSDMNLSDSEGKNLHQYLNFNSNMGLIHTPCSEKDLSSEKRKKWSLCLKKCVEKGQTYRTFQRDSAFSTLSKWNLFQTYMPWFLTSTGYKYLNLIFLDTFSDLLPILSSSQKFVSIFPDIMHGSGISWRILQKKLCLPQWNLISEISSKCLHNLLLSEEMIHRNNESPLISTHLRSPNAREFLYSILFLLLVAGYLVRTHLLFVSRASSELQTEFERVKSLMTPSSMIELRKLLDRYPTSEPNSFWLKNLFLVALEQLGDSLEEIRGSASGGNMLGPAYGVKSIRSKKKDWNINLIEIIDLIPNPINRITFSRNTRHLSHTSKEIYSLIRKRKNVNGDWIDEKIESWVANSDSIDDEEREFLVQFSTLTTENRIDQILLSLTHSDHLSKNDSGYQMIEQPGAIYLRYLVDIHKKHLMNYEFNPSCLAERRIFLAHYQTITYSQTSCGENSFHFPSHGKPFSLRLALSPSRGILVIGSIGTGRSYLVKYLATNSYVPFITVFLNKFLDNKSKGFLLDEIDIDDSDDIDDSDNLDASDDIDRDLDTELELLTRMNGLTVDMMPEIDRFYITLQFELAKAMSPCIIWIPNIHDLDVNESNDLSLGLLVNHLSRDCERCSTRNILVIASTHIPQKVDPALIAPNKLNTCIKIRRLLIPQQRKHFFTLSYTRGFHLEKKMFHTNGFGSITMGSNARDLVALTNEVLSISITQKKSIIDTNTIRSALHRQTWDLRSQVRSVQDHGILFYQIGRAVAQNVLLSNCPIDPISIYMKKKSCNEGDSYLYKWYFELGTSMKRLTILLYLLSCSAGSVAQDLWSLSVPDEKNGITSYGLVENDSDLVHGLLEVEGALVGSSRTEKDCSQFDNDRVTLLLRPEPRNPLDMMQKGSWSILDQRFLYEKYESEFEEGEGEGALDPQEDLFNHIVWAPRIWRPWGFLFDCIERPNELGFPYWSRSFRGKRIIYDEEDELQENDSGFLQSGTMQYQTRDRSQGLFRISQFIWDPADPLFFLFKDQPPGSVFSHRELFADEEMSKGLLTSQTDPPTSLYKRWFIKNTQEKHFELLINRQRWLRTNSSLSNGSFRSNTLSESYQYLSNLFLSNGTLLDQMPKTLLRKRWLFPDEMKIGFM.

This sequence belongs to the Ycf2 family.

The protein resides in the plastid. Its subcellular location is the chloroplast stroma. It is found in the chromoplast stroma. Probable ATPase of unknown function. Its presence in a non-photosynthetic plant (Epifagus virginiana) and experiments in tobacco indicate that it has an essential function which is probably not related to photosynthesis. This chain is Protein Ycf2 (ycf2-A), found in Solanum lycopersicum (Tomato).